Here is a 95-residue protein sequence, read N- to C-terminus: Cell division protein FtsB (95 aa).

The Cytoplasmic portion of the chain corresponds to 1–3 (MRW). Residues 4 to 21 (VLAGLTALLLWLQGLLWF) traverse the membrane as a helical segment. Topologically, residues 22–95 (GEGGLNDVRG…QIIEREDDAR (74 aa)) are periplasmic. Residues 26-76 (LNDVRGLSRSVEAQREEVDRLRQRNQALEAEVNDLKTGLEALEERARSELG) adopt a coiled-coil conformation.

Belongs to the FtsB family. In terms of assembly, part of a complex composed of FtsB, FtsL and FtsQ.

It is found in the cell inner membrane. In terms of biological role, essential cell division protein. May link together the upstream cell division proteins, which are predominantly cytoplasmic, with the downstream cell division proteins, which are predominantly periplasmic. The polypeptide is Cell division protein FtsB (Alkalilimnicola ehrlichii (strain ATCC BAA-1101 / DSM 17681 / MLHE-1)).